The chain runs to 247 residues: Capsid protein (247 aa).

Positions 3 to 20 match the Bipartite nuclear localization signal motif; that stretch reads KRDAPWRLMAGTSKVSRS. The Nuclear localization signal motif lies at 31–45; that stretch reads KRDAWVNRPMYRKPR. The Nuclear export signal signature appears at 92-113; it reads ITHRVGKRFCVKSVYILGKIWM. Residues 191–238 carry the Bipartite nuclear localization signal motif; that stretch reads RRFWKVNNNVVYNHQEAGKYENHTENALLLYMACTHASNPVYATLKIR.

This sequence belongs to the geminiviridae capsid protein family. Homomultimer. Binds to single-stranded and double-stranded viral DNA. Interacts (via nuclear localization signals) with host importin alpha-1a.

It localises to the virion. The protein resides in the host nucleus. Encapsidates the viral DNA into characteristic twinned ('geminate') particles. Binds the genomic viral ssDNA and shuttles it into and out of the cell nucleus. The CP of bipartite geminiviruses is not required for cell-to-cell or systemic movement. This chain is Capsid protein, found in Solanum lycopersicum (Tomato).